The sequence spans 120 residues: Ribosome-binding factor A (120 aa).

It belongs to the RbfA family. As to quaternary structure, monomer. Binds 30S ribosomal subunits, but not 50S ribosomal subunits or 70S ribosomes.

It localises to the cytoplasm. Its function is as follows. One of several proteins that assist in the late maturation steps of the functional core of the 30S ribosomal subunit. Associates with free 30S ribosomal subunits (but not with 30S subunits that are part of 70S ribosomes or polysomes). Required for efficient processing of 16S rRNA. May interact with the 5'-terminal helix region of 16S rRNA. This is Ribosome-binding factor A from Fusobacterium nucleatum subsp. nucleatum (strain ATCC 25586 / DSM 15643 / BCRC 10681 / CIP 101130 / JCM 8532 / KCTC 2640 / LMG 13131 / VPI 4355).